Here is a 103-residue protein sequence, read N- to C-terminus: MTVLERLAATVEARKGVDPDSSWTAKLLARGPEKCAEKFGEEAVEAIIEAVRGDRDRLASEAADVLYHLIVMLAARDVTLAEVMAVLEAREGTSGIAEKAGRG.

It belongs to the PRA-PH family.

It is found in the cytoplasm. It carries out the reaction 1-(5-phospho-beta-D-ribosyl)-ATP + H2O = 1-(5-phospho-beta-D-ribosyl)-5'-AMP + diphosphate + H(+). The protein operates within amino-acid biosynthesis; L-histidine biosynthesis; L-histidine from 5-phospho-alpha-D-ribose 1-diphosphate: step 2/9. This chain is Phosphoribosyl-ATP pyrophosphatase, found in Cereibacter sphaeroides (strain KD131 / KCTC 12085) (Rhodobacter sphaeroides).